A 197-amino-acid polypeptide reads, in one-letter code: Recombination protein RecR (197 aa).

A C4-type zinc finger spans residues 57–72 (CSVCFAITEDDPCWIC). The Toprim domain maps to 79–174 (GTICVVEEPQ…KVTRLAHGIP (96 aa)).

This sequence belongs to the RecR family.

Its function is as follows. May play a role in DNA repair. It seems to be involved in an RecBC-independent recombinational process of DNA repair. It may act with RecF and RecO. The sequence is that of Recombination protein RecR from Geobacter sp. (strain M21).